Consider the following 465-residue polypeptide: MATLPAAETWIDGGGGVGADAVNLTASLAAGAATGAVETGWLQLLDQAGNLSSSPSALGLPVASPAPSQPWANLTNQFVQPSWRIALWSLAYGVVVAVAVLGNLIVIWIILAHKRMRTVTNYFLVNLAFSDASMAAFNTLVNFIYALHSEWYFGANYCRFQNFFPITAVFASIYSMTAIAVDRYMAIIDPLKPRLSATATKIVIGSIWILAFLLAFPQCLYSKTKVMPGRTLCFVQWPEGPKQHFTYHIIVIILVYCFPLLIMGITYTIVGITLWGGEIPGDTCDKYHEQLKAKRKVVKMMIIVVMTFAICWLPYHIYFILTAIYQQLNRWKYIQQVYLASFWLAMSSTMYNPIIYCCLNKRFRAGFKRAFRWCPFIKVSSYDELELKTTRFHPNRQSSMYTVTRMESMTVVFDPNDADTTRSSRKKRATPRDPSFNGCSRRNSKSASATSSFISSPYTSVDEYS.

The Extracellular segment spans residues 1-84; sequence MATLPAAETW…TNQFVQPSWR (84 aa). 3 N-linked (GlcNAc...) asparagine glycosylation sites follow: Asn23, Asn50, and Asn73. A helical membrane pass occupies residues 85–107; that stretch reads IALWSLAYGVVVAVAVLGNLIVI. Residues 108–117 lie on the Cytoplasmic side of the membrane; the sequence is WIILAHKRMR. The chain crosses the membrane as a helical span at residues 118 to 139; the sequence is TVTNYFLVNLAFSDASMAAFNT. Residues 140–159 lie on the Extracellular side of the membrane; sequence LVNFIYALHSEWYFGANYCR. Cys158 and Cys233 are joined by a disulfide. A helical transmembrane segment spans residues 160–181; it reads FQNFFPITAVFASIYSMTAIAV. The Cytoplasmic portion of the chain corresponds to 182–201; sequence DRYMAIIDPLKPRLSATATK. Residues 202–222 form a helical membrane-spanning segment; that stretch reads IVIGSIWILAFLLAFPQCLYS. The Extracellular portion of the chain corresponds to 223–245; it reads KTKVMPGRTLCFVQWPEGPKQHF. The chain crosses the membrane as a helical span at residues 246 to 270; it reads TYHIIVIILVYCFPLLIMGITYTIV. At 271–299 the chain is on the cytoplasmic side; sequence GITLWGGEIPGDTCDKYHEQLKAKRKVVK. The chain crosses the membrane as a helical span at residues 300-321; the sequence is MMIIVVMTFAICWLPYHIYFIL. Residues 322–334 lie on the Extracellular side of the membrane; it reads TAIYQQLNRWKYI. A helical membrane pass occupies residues 335-359; the sequence is QQVYLASFWLAMSSTMYNPIIYCCL. Residues 360 to 465 lie on the Cytoplasmic side of the membrane; that stretch reads NKRFRAGFKR…SPYTSVDEYS (106 aa). Cys374 is lipidated: S-palmitoyl cysteine. Residues 415-465 are disordered; sequence PNDADTTRSSRKKRATPRDPSFNGCSRRNSKSASATSSFISSPYTSVDEYS. Low complexity predominate over residues 445–465; it reads KSASATSSFISSPYTSVDEYS.

It belongs to the G-protein coupled receptor 1 family. The anchoring of this receptor to the plasma membrane is probably mediated by the palmitoylation of a cysteine residue.

It localises to the cell membrane. Its function is as follows. This is a receptor for the tachykinin neuropeptide neuromedin-K (neurokinin B). It is associated with G proteins that activate a phosphatidylinositol-calcium second messenger system. The rank order of affinity of this receptor to tachykinins is: neuromedin-K &gt; substance K &gt; substance P. The polypeptide is Neuromedin-K receptor (TACR3) (Homo sapiens (Human)).